The primary structure comprises 132 residues: MQAMNWLDQVKWDAQGLVPVIAQEKDTGDVMMFAWMNREALAKTAELGRAVYFSRSRNKLWFKGEESGHVQTVHEVRIDCDNDVVLLKITQTGHEPGIACHTGRHSCFYSVLRDGQWQAVDPVLKDPESIYK.

Residue D79 coordinates Mg(2+). A Zn(2+)-binding site is contributed by C80. Residues D81 and D83 each contribute to the Mg(2+) site. Residues C100 and C107 each coordinate Zn(2+).

The protein belongs to the PRA-CH family. Homodimer. It depends on Mg(2+) as a cofactor. Zn(2+) serves as cofactor.

Its subcellular location is the cytoplasm. The catalysed reaction is 1-(5-phospho-beta-D-ribosyl)-5'-AMP + H2O = 1-(5-phospho-beta-D-ribosyl)-5-[(5-phospho-beta-D-ribosylamino)methylideneamino]imidazole-4-carboxamide. It participates in amino-acid biosynthesis; L-histidine biosynthesis; L-histidine from 5-phospho-alpha-D-ribose 1-diphosphate: step 3/9. In terms of biological role, catalyzes the hydrolysis of the adenine ring of phosphoribosyl-AMP. This is Phosphoribosyl-AMP cyclohydrolase from Delftia acidovorans (strain DSM 14801 / SPH-1).